Reading from the N-terminus, the 85-residue chain is MDSKKIARINELAKKKKTEGLTPEEAVEQAKLREEYIAGYRRAVRHHIEGIKIVDEEGNDVTPEKLRQVQREKGLHGRSLDDPES.

The segment at 62-85 (TPEKLRQVQREKGLHGRSLDDPES) is disordered.

The protein belongs to the UPF0291 family.

It localises to the cytoplasm. The sequence is that of UPF0291 protein str0508 from Streptococcus thermophilus (strain CNRZ 1066).